A 209-amino-acid polypeptide reads, in one-letter code: Ribosomal RNA large subunit methyltransferase E (209 aa).

The S-adenosyl-L-methionine site is built by Gly63, Trp65, Asp83, Asp99, and Asp124. Residue Lys164 is the Proton acceptor of the active site.

This sequence belongs to the class I-like SAM-binding methyltransferase superfamily. RNA methyltransferase RlmE family.

Its subcellular location is the cytoplasm. The catalysed reaction is uridine(2552) in 23S rRNA + S-adenosyl-L-methionine = 2'-O-methyluridine(2552) in 23S rRNA + S-adenosyl-L-homocysteine + H(+). Functionally, specifically methylates the uridine in position 2552 of 23S rRNA at the 2'-O position of the ribose in the fully assembled 50S ribosomal subunit. This is Ribosomal RNA large subunit methyltransferase E from Vibrio campbellii (strain ATCC BAA-1116).